Reading from the N-terminus, the 258-residue chain is UPF0758 protein Bcep1808_2579 (258 aa).

Residues 136 to 258 (PIDSPGAVED…TFSFARAGWL (123 aa)) enclose the MPN domain. Zn(2+)-binding residues include His-207, His-209, and Asp-220. The JAMM motif motif lies at 207-220 (HNHPSGAVQPSAED).

This sequence belongs to the UPF0758 family.

The sequence is that of UPF0758 protein Bcep1808_2579 from Burkholderia vietnamiensis (strain G4 / LMG 22486) (Burkholderia cepacia (strain R1808)).